Here is a 397-residue protein sequence, read N- to C-terminus: Tryptophan synthase beta chain (397 aa).

Lysine 87 carries the N6-(pyridoxal phosphate)lysine modification.

This sequence belongs to the TrpB family. In terms of assembly, tetramer of two alpha and two beta chains. Pyridoxal 5'-phosphate is required as a cofactor.

It catalyses the reaction (1S,2R)-1-C-(indol-3-yl)glycerol 3-phosphate + L-serine = D-glyceraldehyde 3-phosphate + L-tryptophan + H2O. It participates in amino-acid biosynthesis; L-tryptophan biosynthesis; L-tryptophan from chorismate: step 5/5. Functionally, the beta subunit is responsible for the synthesis of L-tryptophan from indole and L-serine. The chain is Tryptophan synthase beta chain from Klebsiella pneumoniae (strain 342).